A 493-amino-acid chain; its full sequence is Probable cytochrome P450 508A2 (493 aa).

The helical transmembrane segment at 1–21 threads the bilayer; it reads MIFGIIVYLFLIYILHNAYSK. Cys439 is a binding site for heme.

It belongs to the cytochrome P450 family. The cofactor is heme.

The protein localises to the membrane. This chain is Probable cytochrome P450 508A2 (cyp508A2-1), found in Dictyostelium discoideum (Social amoeba).